Here is a 168-residue protein sequence, read N- to C-terminus: uncharacterized protein (168 aa).

This is an uncharacterized protein from Mycoplasma pneumoniae (strain ATCC 29342 / M129 / Subtype 1) (Mycoplasmoides pneumoniae).